The following is a 93-amino-acid chain: OMEGA-ectatommitoxin(02)-Rm1c (93 aa).

A signal peptide spans 1–30; that stretch reads MKDSYISIVIAYLMVTFILVSSMPIEGEKG. Disulfide bonds link cysteine 39–cysteine 52, cysteine 47–cysteine 68, and cysteine 70–cysteine 79. An EGF-like domain is found at 43-80; it reads YENYCFNGKCVHVVAQDEPGKPCYSCICDEFYIGERCG.

Belongs to the EGF domain peptide family. In terms of tissue distribution, expressed by the venom gland.

The protein localises to the secreted. Ant peptide with probable defensive activity which acts as a potent agonist of the mammalian epidermal growth factor receptor (EGFR). Mimics, both structurally and functionally, vertebrate epidermal growth factor (EGF) peptide hormones. In vivo, intraplantar injection in mice causes long-lasting (several days) hypersensitivity of the injected paw to both mechanical and thermal stimuli. Its long-lasting effect is unusual for venom toxins whose effects are usually immediate. One possible explanation is that it would reduce the duration of a nest attack, discourage future attacks, or enhance the actions of subsequent exposure to other pain-inducing venom peptides. This is OMEGA-ectatommitoxin(02)-Rm1c from Rhytidoponera metallica (Australian green-headed ant).